The primary structure comprises 156 residues: ATP synthase subunit b (156 aa).

Residues 7–27 form a helical membrane-spanning segment; that stretch reads IFFQMLVFFVLGWFTMKFVWP.

It belongs to the ATPase B chain family. As to quaternary structure, F-type ATPases have 2 components, F(1) - the catalytic core - and F(0) - the membrane proton channel. F(1) has five subunits: alpha(3), beta(3), gamma(1), delta(1), epsilon(1). F(0) has three main subunits: a(1), b(2) and c(10-14). The alpha and beta chains form an alternating ring which encloses part of the gamma chain. F(1) is attached to F(0) by a central stalk formed by the gamma and epsilon chains, while a peripheral stalk is formed by the delta and b chains.

The protein localises to the cell inner membrane. Functionally, f(1)F(0) ATP synthase produces ATP from ADP in the presence of a proton or sodium gradient. F-type ATPases consist of two structural domains, F(1) containing the extramembraneous catalytic core and F(0) containing the membrane proton channel, linked together by a central stalk and a peripheral stalk. During catalysis, ATP synthesis in the catalytic domain of F(1) is coupled via a rotary mechanism of the central stalk subunits to proton translocation. In terms of biological role, component of the F(0) channel, it forms part of the peripheral stalk, linking F(1) to F(0). This chain is ATP synthase subunit b, found in Bordetella petrii (strain ATCC BAA-461 / DSM 12804 / CCUG 43448).